A 148-amino-acid polypeptide reads, in one-letter code: Small ribosomal subunit protein bS16 (148 aa).

Low complexity predominate over residues 111–122; sequence AAAGEEPVAEAT. A disordered region spans residues 111-148; sequence AAAGEEPVAEATTPKKKGGKKAEAEDKAEEQKSEEGQA. Basic and acidic residues predominate over residues 130 to 148; the sequence is KKAEAEDKAEEQKSEEGQA.

This sequence belongs to the bacterial ribosomal protein bS16 family.

The sequence is that of Small ribosomal subunit protein bS16 from Saccharopolyspora erythraea (strain ATCC 11635 / DSM 40517 / JCM 4748 / NBRC 13426 / NCIMB 8594 / NRRL 2338).